A 359-amino-acid polypeptide reads, in one-letter code: Aspartate carbamoyltransferase catalytic subunit (359 aa).

Carbamoyl phosphate contacts are provided by R52 and T53. Residue K81 participates in L-aspartate binding. Residues R102, H130, and Q133 each coordinate carbamoyl phosphate. R163 and R224 together coordinate L-aspartate. Residues L264 and P265 each contribute to the carbamoyl phosphate site.

Belongs to the aspartate/ornithine carbamoyltransferase superfamily. ATCase family. In terms of assembly, heterododecamer (2C3:3R2) of six catalytic PyrB chains organized as two trimers (C3), and six regulatory PyrI chains organized as three dimers (R2).

The catalysed reaction is carbamoyl phosphate + L-aspartate = N-carbamoyl-L-aspartate + phosphate + H(+). It participates in pyrimidine metabolism; UMP biosynthesis via de novo pathway; (S)-dihydroorotate from bicarbonate: step 2/3. In terms of biological role, catalyzes the condensation of carbamoyl phosphate and aspartate to form carbamoyl aspartate and inorganic phosphate, the committed step in the de novo pyrimidine nucleotide biosynthesis pathway. In Brachyspira hyodysenteriae (strain ATCC 49526 / WA1), this protein is Aspartate carbamoyltransferase catalytic subunit.